The primary structure comprises 294 residues: Segregation and condensation protein A (294 aa).

The protein belongs to the ScpA family. As to quaternary structure, component of a cohesin-like complex composed of ScpA, ScpB and the Smc homodimer, in which ScpA and ScpB bind to the head domain of Smc. The presence of the three proteins is required for the association of the complex with DNA.

The protein localises to the cytoplasm. Functionally, participates in chromosomal partition during cell division. May act via the formation of a condensin-like complex containing Smc and ScpB that pull DNA away from mid-cell into both cell halves. The polypeptide is Segregation and condensation protein A (Ureaplasma parvum serovar 3 (strain ATCC 700970)).